The following is a 265-amino-acid chain: Photosystem II 22 kDa protein, chloroplastic (265 aa).

The N-terminal 59 residues, 1–59 (MAQTMLLTSGVTAGHFLRNKSPLAQPKVHHLFLSGNSPVALPSRRQSFVPLALFKPKTK), are a transit peptide targeting the chloroplast. A run of 2 repeats spans residues 54-158 (FKPK…FVDD) and 159-264 (PPTG…DGEE). Transmembrane regions (helical) follow at residues 96–116 (VAMI…KGIL), 130–150 (AEPL…GALG), 195–215 (LFVG…EIIT), and 229–249 (IPIQ…FFAA).

It belongs to the ELIP/psbS family.

Its subcellular location is the plastid. It is found in the chloroplast thylakoid membrane. Its function is as follows. Plays an important role in non-photochemical quenching (NPQ), a process maintains the balance between dissipation and utilization of light energy to minimize generation of oxidizing molecules, thereby protecting the plant against photo-oxidative damage; acts upstream of DLDG1. Is not necessary for efficient light harvesting and photosynthesis. This is Photosystem II 22 kDa protein, chloroplastic from Arabidopsis thaliana (Mouse-ear cress).